A 200-amino-acid chain; its full sequence is Phospholipase A2 inhibitor LNF1 (200 aa).

An N-terminal signal peptide occupies residues 1–19 (MKYLHTICLLFIFVARGNS). 8 disulfide bridges follow: Cys22/Cys46, Cys25/Cys32, Cys39/Cys67, Cys73/Cys94, Cys95/Cys100, Cys118/Cys143, Cys136/Cys165, and Cys169/Cys191. An N-linked (GlcNAc...) asparagine glycan is attached at Asn176.

It belongs to the CNF-like-inhibitor family. Occurs as a mixture of oligomers. Tetrameric arrangement appears to be the predominant quaternary structure. Expressed by the liver.

The protein localises to the secreted. In terms of biological role, inhibits the enzymatic activity of phospholipase A2 (PA2). In Lachesis muta muta (Bushmaster), this protein is Phospholipase A2 inhibitor LNF1.